A 185-amino-acid polypeptide reads, in one-letter code: uncharacterized protein (185 aa).

The region spanning 9–169 (VILELAKESD…NGREDDKPLL (161 aa)) is the N-acetyltransferase domain.

This is an uncharacterized protein from Bacillus subtilis (strain 168).